Consider the following 408-residue polypeptide: Succinylornithine transaminase (408 aa).

N6-(pyridoxal phosphate)lysine is present on lysine 252.

This sequence belongs to the class-III pyridoxal-phosphate-dependent aminotransferase family. AstC subfamily. It depends on pyridoxal 5'-phosphate as a cofactor.

It catalyses the reaction N(2)-succinyl-L-ornithine + 2-oxoglutarate = N-succinyl-L-glutamate 5-semialdehyde + L-glutamate. It functions in the pathway amino-acid degradation; L-arginine degradation via AST pathway; L-glutamate and succinate from L-arginine: step 3/5. Functionally, catalyzes the transamination of N(2)-succinylornithine and alpha-ketoglutarate into N(2)-succinylglutamate semialdehyde and glutamate. Can also act as an acetylornithine aminotransferase. The sequence is that of Succinylornithine transaminase from Salmonella typhimurium (strain LT2 / SGSC1412 / ATCC 700720).